The sequence spans 52 residues: UPF0181 protein NTHI1697 (52 aa).

This sequence belongs to the UPF0181 family.

The protein is UPF0181 protein NTHI1697 of Haemophilus influenzae (strain 86-028NP).